The sequence spans 134 residues: Profilin-2 (134 aa).

Cysteines 13 and 118 form a disulfide. The short motif at 84-100 is the Involved in PIP2 interaction element; that stretch reads AVIRGKKGSGGITIKKT. Residue Thr114 is modified to Phosphothreonine.

It belongs to the profilin family. As to quaternary structure, occurs in many kinds of cells as a complex with monomeric actin in a 1:1 ratio. In terms of processing, phosphorylated by MAP kinases.

It is found in the cytoplasm. Its subcellular location is the cytoskeleton. Its function is as follows. Binds to actin and affects the structure of the cytoskeleton. At high concentrations, profilin prevents the polymerization of actin, whereas it enhances it at low concentrations. The polypeptide is Profilin-2 (Olea europaea (Common olive)).